Reading from the N-terminus, the 540-residue chain is CTP synthase (540 aa).

Residues 1–266 form an amidoligase domain region; it reads MAVKYIFVTG…LTPIARHLEL (266 aa). Ser14 is a binding site for CTP. Ser14 serves as a coordination point for UTP. ATP contacts are provided by residues 15–20 and Asp72; that span reads SLGKGI. Mg(2+) contacts are provided by Asp72 and Glu140. CTP is bound by residues 147-149, 187-192, and Lys223; these read DIE and KTKPTQ. UTP-binding positions include 187 to 192 and Lys223; that span reads KTKPTQ. Positions 291–540 constitute a Glutamine amidotransferase type-1 domain; it reads TIGFVGKYLS…VKETLAHKKT (250 aa). Gly351 lines the L-glutamine pocket. Cys378 (nucleophile; for glutamine hydrolysis) is an active-site residue. Residues 379–382, Glu402, and Arg470 contribute to the L-glutamine site; that span reads LGMQ. Active-site residues include His513 and Glu515.

The protein belongs to the CTP synthase family. As to quaternary structure, homotetramer.

The catalysed reaction is UTP + L-glutamine + ATP + H2O = CTP + L-glutamate + ADP + phosphate + 2 H(+). It carries out the reaction L-glutamine + H2O = L-glutamate + NH4(+). It catalyses the reaction UTP + NH4(+) + ATP = CTP + ADP + phosphate + 2 H(+). It functions in the pathway pyrimidine metabolism; CTP biosynthesis via de novo pathway; CTP from UDP: step 2/2. Allosterically activated by GTP, when glutamine is the substrate; GTP has no effect on the reaction when ammonia is the substrate. The allosteric effector GTP functions by stabilizing the protein conformation that binds the tetrahedral intermediate(s) formed during glutamine hydrolysis. Inhibited by the product CTP, via allosteric rather than competitive inhibition. In terms of biological role, catalyzes the ATP-dependent amination of UTP to CTP with either L-glutamine or ammonia as the source of nitrogen. Regulates intracellular CTP levels through interactions with the four ribonucleotide triphosphates. This chain is CTP synthase, found in Helicobacter hepaticus (strain ATCC 51449 / 3B1).